A 154-amino-acid polypeptide reads, in one-letter code: SsrA-binding protein (154 aa).

Residues 134–154 (KRQAIKERQTQREIQRELKER) are disordered.

This sequence belongs to the SmpB family.

The protein localises to the cytoplasm. In terms of biological role, required for rescue of stalled ribosomes mediated by trans-translation. Binds to transfer-messenger RNA (tmRNA), required for stable association of tmRNA with ribosomes. tmRNA and SmpB together mimic tRNA shape, replacing the anticodon stem-loop with SmpB. tmRNA is encoded by the ssrA gene; the 2 termini fold to resemble tRNA(Ala) and it encodes a 'tag peptide', a short internal open reading frame. During trans-translation Ala-aminoacylated tmRNA acts like a tRNA, entering the A-site of stalled ribosomes, displacing the stalled mRNA. The ribosome then switches to translate the ORF on the tmRNA; the nascent peptide is terminated with the 'tag peptide' encoded by the tmRNA and targeted for degradation. The ribosome is freed to recommence translation, which seems to be the essential function of trans-translation. In Synechococcus sp. (strain JA-2-3B'a(2-13)) (Cyanobacteria bacterium Yellowstone B-Prime), this protein is SsrA-binding protein.